Reading from the N-terminus, the 994-residue chain is MPPKASNSTEVWINPKLSVKFPFEPYECQRIFMKNVVDVLDRKLDAALESPTGTGKTLSLLCSTLAWVQRQKETKPLDFATWQTSGAGGAEKTDEKLKSAYVPTIFYASRTHSQLEQVVHELNRTEYKWVKTTILGSREHFCINQKVKKIKESNRQAHVCRGLVSKRACHYYNKFDACTTDKMTEFLDKGEAMDIEDFVKLGTQNSLCPYFMSRQRSETAELILLPYNYIIDPKMRRRYKLDLKNSIVIFDEAHNLESICESNASAELTSTSIALCIEELKKVLALLVDEEETARSEADAETGAFGSAKIDLTKKLIENLRTEDLMTVLEKIFSLEEEMDKLFGSSQLKSVPPLSGKASDGEILLETLAKAGFDANSVERLVDVLRDAISYLLSKNEEVALTEKGDGMEKVADFLLSIYSTHAQDVAAAVGEETVKLVDRVDPKTVARNCKLYIQKDKDNEKLTIKYFCFQASISMRMLKMRGVRNVLLASGTLSPIQAFTYNMGLNFGAILENEHALKQVPVLTSIVTRGKRGGLAGSFQNRKNLDYVTGVAEALLRVMEVIPQGILIFFSSYSQMDELVATWKTTKWSSNSNESFWEKMEKTKRVVVEPRAKEELAAIRLRYTQGVSEQHGAALLAVCRGKVSEGIDFCDAESRAVIIIGIPYPPIHDERVVLKKMYLDDLMGRKDTKSERQSSQDWYQMEAFRAVNQAIGRVLRHKDDFGTVVLMDTRYASAKPEMFPKWLRNTISRSDTDGCALKTSRFFKERGHLIENSKTEYIKKQAKQCKSFRQVKQTAASDSKDDIIEITLEDMFSPANMKLEKKEITKLRPPQLIPSTSSVFSLPTNEDELKIKKWEQENDIQCLSSIPLESNKRKFKIETPGPSTSTLTQKSEPPKKKKILLLTRNTLPDEYQKAIEIPTSELLKDMSDDNKKQFATTLRSYKAESIRWDEVFQRFRPIFVPHKADLFIACSNVLRSEDKMKYLKKALESKIHT.

In terms of domain architecture, Helicase ATP-binding spans 15-300 (PKLSVKFPFE…EETARSEADA (286 aa)). 50 to 57 (SPTGTGKT) is a binding site for ATP. Residues C142, C160, C169, and C208 each contribute to the [4Fe-4S] cluster site. The short motif at 251–254 (DEAH) is the DEAH box element. The tract at residues 876–895 (FKIETPGPSTSTLTQKSEPP) is disordered. Over residues 882 to 892 (GPSTSTLTQKS) the composition is skewed to polar residues.

Belongs to the helicase family. RAD3/XPD subfamily.

It is found in the nucleus. The catalysed reaction is ATP + H2O = ADP + phosphate + H(+). Its function is as follows. A probable ATP-dependent DNA helicase implicated in DNA repair and the maintenance of genomic stability. Acts as an anti-recombinase to counteract toxic recombination and limit crossover during meiosis. Regulates meiotic recombination and crossover homeostasis by physically dissociating strand invasion events and thereby promotes noncrossover repair by meiotic synthesis dependent strand annealing (SDSA) as well as disassembly of D loop recombination intermediates. This is Regulator of telomere elongation helicase 1 homolog from Caenorhabditis elegans.